Here is a 102-residue protein sequence, read N- to C-terminus: Large ribosomal subunit protein bL21 (102 aa).

It belongs to the bacterial ribosomal protein bL21 family. Part of the 50S ribosomal subunit. Contacts protein L20.

Its function is as follows. This protein binds to 23S rRNA in the presence of protein L20. The protein is Large ribosomal subunit protein bL21 of Cutibacterium acnes (strain DSM 16379 / KPA171202) (Propionibacterium acnes).